A 110-amino-acid polypeptide reads, in one-letter code: MAGVALKREGPQFISEAAVRGNAAVLDYCRTSVSALSGATAGILGLTSLYGFIFYFLASFLLSLLLVLKSGRKWNKYFKSRKPLFTGGLVGGLFTYVLFWTFLYGMVHVY.

Residues 1–28 (MAGVALKREGPQFISEAAVRGNAAVLDY) lie on the Cytoplasmic side of the membrane. Residues 29-44 (CRTSVSALSGATAGIL) form a helical membrane-spanning segment. The Lumenal segment spans residues 45–50 (GLTSLY). A helical membrane pass occupies residues 51 to 71 (GFIFYFLASFLLSLLLVLKSG). At 72–89 (RKWNKYFKSRKPLFTGGL) the chain is on the cytoplasmic side. Residues 90–106 (VGGLFTYVLFWTFLYGM) traverse the membrane as a helical segment. The Lumenal segment spans residues 107 to 110 (VHVY).

The protein belongs to the EMC6 family. Component of the ER membrane protein complex (EMC).

It is found in the endoplasmic reticulum membrane. Part of the endoplasmic reticulum membrane protein complex (EMC) that enables the energy-independent insertion into endoplasmic reticulum membranes of newly synthesized membrane proteins. Preferentially accommodates proteins with transmembrane domains that are weakly hydrophobic or contain destabilizing features such as charged and aromatic residues. Involved in the cotranslational insertion of multi-pass membrane proteins in which stop-transfer membrane-anchor sequences become ER membrane spanning helices. It is also required for the post-translational insertion of tail-anchored/TA proteins in endoplasmic reticulum membranes. By mediating the proper cotranslational insertion of N-terminal transmembrane domains in an N-exo topology, with translocated N-terminus in the lumen of the ER, controls the topology of multi-pass membrane proteins like the G protein-coupled receptors. By regulating the insertion of various proteins in membranes, it is indirectly involved in many cellular processes. This chain is ER membrane protein complex subunit 6 (emc6), found in Xenopus laevis (African clawed frog).